The sequence spans 397 residues: 42.8 kDa protein in whiE locus (397 aa).

The disordered stretch occupies residues 1–22 (MTVSPVVATDAPSTDATRTTAT). Residues 8–22 (ATDAPSTDATRTTAT) are compositionally biased toward low complexity. An ABM domain is found at 46–137 (VRVVLMLDVH…DTHSLRYSVL (92 aa)).

Belongs to the SchA/CurD family.

The sequence is that of 42.8 kDa protein in whiE locus from Streptomyces coelicolor (strain ATCC BAA-471 / A3(2) / M145).